The sequence spans 191 residues: Fe/S biogenesis protein NfuA (191 aa).

Cysteine 149 and cysteine 152 together coordinate [4Fe-4S] cluster.

The protein belongs to the NfuA family. In terms of assembly, homodimer. The cofactor is [4Fe-4S] cluster.

In terms of biological role, involved in iron-sulfur cluster biogenesis. Binds a 4Fe-4S cluster, can transfer this cluster to apoproteins, and thereby intervenes in the maturation of Fe/S proteins. Could also act as a scaffold/chaperone for damaged Fe/S proteins. The chain is Fe/S biogenesis protein NfuA from Erwinia tasmaniensis (strain DSM 17950 / CFBP 7177 / CIP 109463 / NCPPB 4357 / Et1/99).